The primary structure comprises 242 residues: Type III pantothenate kinase (242 aa).

7–14 contacts ATP; sequence DLGNSRFK. Residues tyrosine 91 and 98-101 each bind substrate; that span reads GVDR. Aspartate 100 functions as the Proton acceptor in the catalytic mechanism. Threonine 121 serves as a coordination point for ATP. Threonine 171 contacts substrate.

It belongs to the type III pantothenate kinase family. As to quaternary structure, homodimer. Requires NH4(+) as cofactor. K(+) is required as a cofactor.

The protein resides in the cytoplasm. The catalysed reaction is (R)-pantothenate + ATP = (R)-4'-phosphopantothenate + ADP + H(+). The protein operates within cofactor biosynthesis; coenzyme A biosynthesis; CoA from (R)-pantothenate: step 1/5. In terms of biological role, catalyzes the phosphorylation of pantothenate (Pan), the first step in CoA biosynthesis. The polypeptide is Type III pantothenate kinase (Xylella fastidiosa (strain 9a5c)).